Here is a 311-residue protein sequence, read N- to C-terminus: Malate dehydrogenase (311 aa).

Residues 7 to 13 and Asp34 each bind NAD(+); that span reads GAAGGIG. Arg81 and Arg87 together coordinate substrate. Residues Asn94 and 117–119 each bind NAD(+); that span reads ITN. 2 residues coordinate substrate: Asn119 and Arg153. Residue His177 is the Proton acceptor of the active site. Met227 contributes to the NAD(+) binding site.

The protein belongs to the LDH/MDH superfamily. MDH type 1 family. As to quaternary structure, homodimer.

It carries out the reaction (S)-malate + NAD(+) = oxaloacetate + NADH + H(+). Its function is as follows. Catalyzes the reversible oxidation of malate to oxaloacetate. This Shewanella sp. (strain ANA-3) protein is Malate dehydrogenase.